The chain runs to 211 residues: Glycerol-3-phosphate acyltransferase (211 aa).

The next 5 membrane-spanning stretches (helical) occupy residues 5-25 (VILG…TGYL), 55-75 (GPGL…ILVA), 85-105 (PVPA…AVLA), 126-146 (VLLA…LVVL), and 168-188 (WFFT…AFVI).

Belongs to the PlsY family. In terms of assembly, probably interacts with PlsX.

It is found in the cell inner membrane. The catalysed reaction is an acyl phosphate + sn-glycerol 3-phosphate = a 1-acyl-sn-glycero-3-phosphate + phosphate. It participates in lipid metabolism; phospholipid metabolism. Functionally, catalyzes the transfer of an acyl group from acyl-phosphate (acyl-PO(4)) to glycerol-3-phosphate (G3P) to form lysophosphatidic acid (LPA). This enzyme utilizes acyl-phosphate as fatty acyl donor, but not acyl-CoA or acyl-ACP. The polypeptide is Glycerol-3-phosphate acyltransferase (Thermosynechococcus vestitus (strain NIES-2133 / IAM M-273 / BP-1)).